We begin with the raw amino-acid sequence, 295 residues long: MITELHGIDIRENEPLKHYTYTKVGGPADFLAFPRNHYELSRIVAYANKENMPWLVLGNASNLIVRDGGIRGFVIMFDKLNAVHLNGYTLEAEAGANLIETTKIAKFHSLTGFEFACGIPGSIGGAVFMNAGAYGGEISHIFLSAKVLTPSGEIKTISARDMAFGYRHSAIQETGDIVISAKFALKPGNYDTISQEMNRLNHLRQLKQPLEFPSCGSVFKRPPGHFAGQLIMEANLKGHRIGGVEVSEKHTGFMINVADGTAKDYEDLIAYVIETVENHSGVRLEPEVRIIGENL.

Residues 23–188 form the FAD-binding PCMH-type domain; the sequence is KVGGPADFLA…ISAKFALKPG (166 aa). Arg-167 is an active-site residue. Catalysis depends on Ser-217, which acts as the Proton donor. Glu-287 is a catalytic residue.

Belongs to the MurB family. The cofactor is FAD.

Its subcellular location is the cytoplasm. It catalyses the reaction UDP-N-acetyl-alpha-D-muramate + NADP(+) = UDP-N-acetyl-3-O-(1-carboxyvinyl)-alpha-D-glucosamine + NADPH + H(+). It functions in the pathway cell wall biogenesis; peptidoglycan biosynthesis. Cell wall formation. In Streptococcus pyogenes serotype M1, this protein is UDP-N-acetylenolpyruvoylglucosamine reductase.